The chain runs to 259 residues: Tryptophan synthase alpha chain (259 aa).

Catalysis depends on proton acceptor residues Glu-42 and Asp-53.

The protein belongs to the TrpA family. Tetramer of two alpha and two beta chains.

It catalyses the reaction (1S,2R)-1-C-(indol-3-yl)glycerol 3-phosphate + L-serine = D-glyceraldehyde 3-phosphate + L-tryptophan + H2O. The protein operates within amino-acid biosynthesis; L-tryptophan biosynthesis; L-tryptophan from chorismate: step 5/5. The alpha subunit is responsible for the aldol cleavage of indoleglycerol phosphate to indole and glyceraldehyde 3-phosphate. The polypeptide is Tryptophan synthase alpha chain (Erythrobacter litoralis (strain HTCC2594)).